The primary structure comprises 106 residues: Large ribosomal subunit protein uL24 (106 aa).

Belongs to the universal ribosomal protein uL24 family. Part of the 50S ribosomal subunit.

Functionally, one of two assembly initiator proteins, it binds directly to the 5'-end of the 23S rRNA, where it nucleates assembly of the 50S subunit. In terms of biological role, one of the proteins that surrounds the polypeptide exit tunnel on the outside of the subunit. The protein is Large ribosomal subunit protein uL24 of Azobacteroides pseudotrichonymphae genomovar. CFP2.